The primary structure comprises 363 residues: tRNA(Met) cytidine acetate ligase (363 aa).

ATP-binding positions include 7–20, glycine 96, asparagine 152, and arginine 175; that span reads IAEF…HKYL.

The protein belongs to the TmcAL family.

It localises to the cytoplasm. It carries out the reaction cytidine(34) in elongator tRNA(Met) + acetate + ATP = N(4)-acetylcytidine(34) in elongator tRNA(Met) + AMP + diphosphate. Functionally, catalyzes the formation of N(4)-acetylcytidine (ac(4)C) at the wobble position of elongator tRNA(Met), using acetate and ATP as substrates. First activates an acetate ion to form acetyladenylate (Ac-AMP) and then transfers the acetyl group to tRNA to form ac(4)C34. This Streptococcus thermophilus (strain ATCC BAA-491 / LMD-9) protein is tRNA(Met) cytidine acetate ligase.